The sequence spans 395 residues: THP3 homolog C2A9.11c (395 aa).

A disordered region spans residues 91–127 (LLSEEDEVDKKEKRRRRFENGSRSQNNAKSEELKVNP). The PCI domain maps to 218 to 384 (DVGEYNQCQT…STDRFEKCMK (167 aa)).

Belongs to the THP3 family.

The protein localises to the cytoplasm. Its subcellular location is the nucleus. Functionally, required for transcription elongation. May also be involved in pre-mRNA splicing. The polypeptide is THP3 homolog C2A9.11c (Schizosaccharomyces pombe (strain 972 / ATCC 24843) (Fission yeast)).